Here is a 510-residue protein sequence, read N- to C-terminus: NAD(P)H-quinone oxidoreductase subunit 2 B, chloroplastic (510 aa).

13 consecutive transmembrane segments (helical) span residues 24 to 44, 57 to 77, 99 to 119, 124 to 144, 149 to 169, 183 to 203, 227 to 247, 295 to 315, 323 to 343, 354 to 374, 395 to 415, 418 to 438, and 484 to 504; these read LLLF…GLIL, IPWL…ALLF, IFQF…VEYI, MAIT…MFLC, LITI…LSGY, YLLM…WLYG, PGIS…LSPA, WHLL…LIAI, MLAY…IVGD, YMLF…LFGL, ALSL…AGFF, LYLF…IGLL, and MIVC…IIAI.

It belongs to the complex I subunit 2 family. In terms of assembly, NDH is composed of at least 16 different subunits, 5 of which are encoded in the nucleus.

Its subcellular location is the plastid. It is found in the chloroplast thylakoid membrane. The enzyme catalyses a plastoquinone + NADH + (n+1) H(+)(in) = a plastoquinol + NAD(+) + n H(+)(out). It catalyses the reaction a plastoquinone + NADPH + (n+1) H(+)(in) = a plastoquinol + NADP(+) + n H(+)(out). Functionally, NDH shuttles electrons from NAD(P)H:plastoquinone, via FMN and iron-sulfur (Fe-S) centers, to quinones in the photosynthetic chain and possibly in a chloroplast respiratory chain. The immediate electron acceptor for the enzyme in this species is believed to be plastoquinone. Couples the redox reaction to proton translocation, and thus conserves the redox energy in a proton gradient. In Helianthus annuus (Common sunflower), this protein is NAD(P)H-quinone oxidoreductase subunit 2 B, chloroplastic.